Here is a 149-residue protein sequence, read N- to C-terminus: MNKASRQKKIRELIENHEVSGQQELLGMLEKEGIVVAQATLSRDFAEMGVVRNRTSDGGYRLAVPEEPQVDIIKGLVGMEVLSVASNETSIIIRTLPGRAHGVGSFLDRLTNDNILGTIAGDDTVLVIPSTVRKISSVKSYIQKILSQP.

It belongs to the ArgR family.

It localises to the cytoplasm. Its pathway is amino-acid biosynthesis; L-arginine biosynthesis [regulation]. In terms of biological role, regulates arginine biosynthesis genes. This is Arginine repressor from Chlorobaculum tepidum (strain ATCC 49652 / DSM 12025 / NBRC 103806 / TLS) (Chlorobium tepidum).